The following is a 96-amino-acid chain: Prokineticin Bm8-d (96 aa).

Residues 1 to 19 (MKCFAQIVVLLLVIAFSHG) form the signal peptide. Disulfide bonds link Cys26/Cys38, Cys32/Cys50, Cys37/Cys78, Cys60/Cys86, and Cys80/Cys95.

This sequence belongs to the AVIT (prokineticin) family. As to expression, expressed by the skin glands.

The protein localises to the secreted. Its function is as follows. Potent agonist for both PKR1/PROKR1 and PKR2/PROKR2, and inducer of a potent and long-lasting hyperalgesia. Also potentiates capsaicin-induced TRPV1 current, when tested on DRG neurons. At subnanomolar concentrations, this protein both induces potent chemotaxis of macrophages and stimulates LPS-induced production of the pro-inflammatory cytokines IL-1 and IL-12. In vivo, potently stimulates the contraction of the guinea-pig gastrointestinal (GI) smooth muscle (nanomolar concentration). The sequence is that of Prokineticin Bm8-d from Bombina maxima (Giant fire-bellied toad).